Reading from the N-terminus, the 183-residue chain is Shikimate kinase (183 aa).

14-19 serves as a coordination point for ATP; sequence GAGKTT. Residue Thr18 participates in Mg(2+) binding. Asp36, Arg60, and Gly82 together coordinate substrate. Arg120 contributes to the ATP binding site. Arg139 contributes to the substrate binding site. Position 156 (Gln156) interacts with ATP.

It belongs to the shikimate kinase family. As to quaternary structure, monomer. The cofactor is Mg(2+).

It localises to the cytoplasm. The enzyme catalyses shikimate + ATP = 3-phosphoshikimate + ADP + H(+). It participates in metabolic intermediate biosynthesis; chorismate biosynthesis; chorismate from D-erythrose 4-phosphate and phosphoenolpyruvate: step 5/7. Its function is as follows. Catalyzes the specific phosphorylation of the 3-hydroxyl group of shikimic acid using ATP as a cosubstrate. The polypeptide is Shikimate kinase (Thiobacillus denitrificans (strain ATCC 25259 / T1)).